Consider the following 348-residue polypeptide: Ion-translocating oxidoreductase complex subunit D (348 aa).

The next 3 membrane-spanning stretches (helical) occupy residues 25 to 45 (ILAA…GTFI), 68 to 88 (PISP…IGVA), and 124 to 144 (AMAA…TWAA). The residue at position 182 (Thr-182) is an FMN phosphoryl threonine. The next 5 membrane-spanning stretches (helical) occupy residues 211–231 (TGEG…FLLA), 237–257 (WHIS…GFGA), 263–283 (ASPL…FIAT), 296–316 (LLFG…GGYP), and 317–337 (DGVA…DYYI).

This sequence belongs to the NqrB/RnfD family. The complex is composed of six subunits: RnfA, RnfB, RnfC, RnfD, RnfE and RnfG. Requires FMN as cofactor.

The protein resides in the cell inner membrane. Functionally, part of a membrane-bound complex that couples electron transfer with translocation of ions across the membrane. The protein is Ion-translocating oxidoreductase complex subunit D of Shewanella amazonensis (strain ATCC BAA-1098 / SB2B).